Here is a 140-residue protein sequence, read N- to C-terminus: uncharacterized protein (140 aa).

The disordered stretch occupies residues 34–88 (PLRWRNRARNREKPHSPRAVSSPATHSLPPSNPCRLTPTLSSARPREGSCPSKCS).

As to expression, expressed in a range of cell lines, including B-cell lymphoma and prostate.

This is an uncharacterized protein from Homo sapiens (Human).